The sequence spans 573 residues: Phosphoenolpyruvate-protein phosphotransferase (573 aa).

His-190 (tele-phosphohistidine intermediate) is an active-site residue. Phosphoenolpyruvate is bound by residues Arg-297 and Arg-333. 2 residues coordinate Mg(2+): Glu-432 and Asp-456. Residues 455–456 (ND) and Arg-466 contribute to the phosphoenolpyruvate site. Cys-503 (proton donor) is an active-site residue.

Belongs to the PEP-utilizing enzyme family. In terms of assembly, homodimer. It depends on Mg(2+) as a cofactor.

The protein resides in the cytoplasm. It catalyses the reaction L-histidyl-[protein] + phosphoenolpyruvate = N(pros)-phospho-L-histidyl-[protein] + pyruvate. In terms of biological role, general (non sugar-specific) component of the phosphoenolpyruvate-dependent sugar phosphotransferase system (sugar PTS). This major carbohydrate active-transport system catalyzes the phosphorylation of incoming sugar substrates concomitantly with their translocation across the cell membrane. Enzyme I transfers the phosphoryl group from phosphoenolpyruvate (PEP) to the phosphoryl carrier protein (HPr). This chain is Phosphoenolpyruvate-protein phosphotransferase (ptsI), found in Priestia megaterium (Bacillus megaterium).